The sequence spans 443 residues: tRNA-2-methylthio-N(6)-dimethylallyladenosine synthase (443 aa).

The MTTase N-terminal domain maps to 12–126 (KTFRVKSFGC…LPEMVADAAA (115 aa)). [4Fe-4S] cluster is bound by residues C21, C57, C89, C162, C166, and C169. One can recognise a Radical SAM core domain in the interval 148–380 (RKSAPTAFLT…QAALNRDQLA (233 aa)). The 61-residue stretch at 383 to 443 (KASVGKTCEV…GPNSISGRLA (61 aa)) folds into the TRAM domain.

It belongs to the methylthiotransferase family. MiaB subfamily. As to quaternary structure, monomer. The cofactor is [4Fe-4S] cluster.

It localises to the cytoplasm. The enzyme catalyses N(6)-dimethylallyladenosine(37) in tRNA + (sulfur carrier)-SH + AH2 + 2 S-adenosyl-L-methionine = 2-methylsulfanyl-N(6)-dimethylallyladenosine(37) in tRNA + (sulfur carrier)-H + 5'-deoxyadenosine + L-methionine + A + S-adenosyl-L-homocysteine + 2 H(+). Catalyzes the methylthiolation of N6-(dimethylallyl)adenosine (i(6)A), leading to the formation of 2-methylthio-N6-(dimethylallyl)adenosine (ms(2)i(6)A) at position 37 in tRNAs that read codons beginning with uridine. This Novosphingobium aromaticivorans (strain ATCC 700278 / DSM 12444 / CCUG 56034 / CIP 105152 / NBRC 16084 / F199) protein is tRNA-2-methylthio-N(6)-dimethylallyladenosine synthase.